A 443-amino-acid chain; its full sequence is MIKKLPTSPKIGMVSLGCPKALVDSERILTKLRSEGYNLSSQYDEADVVLVNTCGFIDSAKEESLDAIGEAMAENGRVIVTGCLGNEANRIRERFPDILAITGAQQYEEVVSAVHDAAPIEASPYVDLVPEQGLKLTPRHYSYLKISEGCNHRCSFCIIPSLRGDLVSRRADAILREAEKLVAAGTKELLVIGQDSSAYGVDLRHQEYRWKDRMVKADLTDLARGLGELGAWVRLHYVYPYPHVDNLIPLMAEGLILPYLDIPFQHASPSVLKRMKRPANEVKILDRLTKWREIVPDIALRSSFVVGFPGETEQDFQYLLDWLDEAQLDRVGAFRFEAVEGAAANAFDGAVPEEVKNERYQRLMEKAAQISEAKLQAKIGRDIATIIDRTDGEGGASGRSYADAPEIDGEVHLRDADNLKIGDIVTVRVEDADEHDLFGVALS.

Residues 9–119 form the MTTase N-terminal domain; it reads PKIGMVSLGC…VVSAVHDAAP (111 aa). Cysteine 18, cysteine 54, cysteine 83, cysteine 150, cysteine 154, and cysteine 157 together coordinate [4Fe-4S] cluster. Positions 136–373 constitute a Radical SAM core domain; that stretch reads LTPRHYSYLK…MEKAAQISEA (238 aa). One can recognise a TRAM domain in the interval 376-443; sequence QAKIGRDIAT…EHDLFGVALS (68 aa).

The protein belongs to the methylthiotransferase family. RimO subfamily. [4Fe-4S] cluster is required as a cofactor.

Its subcellular location is the cytoplasm. The catalysed reaction is L-aspartate(89)-[ribosomal protein uS12]-hydrogen + (sulfur carrier)-SH + AH2 + 2 S-adenosyl-L-methionine = 3-methylsulfanyl-L-aspartate(89)-[ribosomal protein uS12]-hydrogen + (sulfur carrier)-H + 5'-deoxyadenosine + L-methionine + A + S-adenosyl-L-homocysteine + 2 H(+). Catalyzes the methylthiolation of an aspartic acid residue of ribosomal protein uS12. The protein is Ribosomal protein uS12 methylthiotransferase RimO of Zymomonas mobilis subsp. mobilis (strain ATCC 31821 / ZM4 / CP4).